The primary structure comprises 134 residues: Small ribosomal subunit protein bS6 (134 aa).

Residues 113–122 (NRDIKEKEQP) show a composition bias toward basic and acidic residues. Residues 113-134 (NRDIKEKEQPSESNVDADLKVN) are disordered.

This sequence belongs to the bacterial ribosomal protein bS6 family.

Its function is as follows. Binds together with bS18 to 16S ribosomal RNA. The sequence is that of Small ribosomal subunit protein bS6 from Borrelia duttonii (strain Ly).